A 433-amino-acid polypeptide reads, in one-letter code: D-amino acid dehydrogenase (433 aa).

Val-3–Tyr-17 contacts FAD.

The protein belongs to the DadA oxidoreductase family. FAD is required as a cofactor.

It carries out the reaction a D-alpha-amino acid + A + H2O = a 2-oxocarboxylate + AH2 + NH4(+). In terms of biological role, oxidative deamination of D-amino acids. In Pseudomonas syringae pv. tomato (strain ATCC BAA-871 / DC3000), this protein is D-amino acid dehydrogenase.